Reading from the N-terminus, the 267-residue chain is MRKKTSSNKKKQTKKTNNISLRRKLRLIYKKAILGLKIALIIFVCLFVFTKYFAGIKTYLTTNIYQTTTKLGFKLENVIIEGQQNVDEPTILKVLNANKGSPIFALKLDEIRNNLKKNKWIKEVYVSRRLPNTVYIKLFEREPIAIWQINNQLFLVDEEGYEISKNIQPFPHLLHVVGEGANIYAGKLVLELQKYPALMNKTSAAIRLGDRRWDLNLKGNISIKLPEKEFEEALKYVDALNKANKLFNQNYKALDLRDKNKYYIEKY.

Topologically, residues 1-32 (MRKKTSSNKKKQTKKTNNISLRRKLRLIYKKA) are cytoplasmic. A helical membrane pass occupies residues 33 to 53 (ILGLKIALIIFVCLFVFTKYF). Topologically, residues 54–267 (AGIKTYLTTN…DKNKYYIEKY (214 aa)) are periplasmic. In terms of domain architecture, POTRA spans 73-141 (FKLENVIIEG…NTVYIKLFER (69 aa)).

Belongs to the FtsQ/DivIB family. FtsQ subfamily.

It localises to the cell inner membrane. Its function is as follows. Essential cell division protein. The sequence is that of Cell division protein FtsQ from Rickettsia felis (strain ATCC VR-1525 / URRWXCal2) (Rickettsia azadi).